Reading from the N-terminus, the 243-residue chain is 2-C-methyl-D-erythritol 4-phosphate cytidylyltransferase (243 aa).

It belongs to the IspD/TarI cytidylyltransferase family. IspD subfamily. In terms of assembly, homodimer.

The catalysed reaction is 2-C-methyl-D-erythritol 4-phosphate + CTP + H(+) = 4-CDP-2-C-methyl-D-erythritol + diphosphate. The protein operates within isoprenoid biosynthesis; isopentenyl diphosphate biosynthesis via DXP pathway; isopentenyl diphosphate from 1-deoxy-D-xylulose 5-phosphate: step 2/6. Its function is as follows. Catalyzes the formation of 4-diphosphocytidyl-2-C-methyl-D-erythritol from CTP and 2-C-methyl-D-erythritol 4-phosphate (MEP). The chain is 2-C-methyl-D-erythritol 4-phosphate cytidylyltransferase from Photorhabdus laumondii subsp. laumondii (strain DSM 15139 / CIP 105565 / TT01) (Photorhabdus luminescens subsp. laumondii).